Consider the following 201-residue polypeptide: Orotate phosphoribosyltransferase (201 aa).

E113–S121 contributes to the 5-phospho-alpha-D-ribose 1-diphosphate binding site. Orotate-binding residues include T117 and R145.

Belongs to the purine/pyrimidine phosphoribosyltransferase family. PyrE subfamily. As to quaternary structure, homodimer. Requires Mg(2+) as cofactor.

The enzyme catalyses orotidine 5'-phosphate + diphosphate = orotate + 5-phospho-alpha-D-ribose 1-diphosphate. The protein operates within pyrimidine metabolism; UMP biosynthesis via de novo pathway; UMP from orotate: step 1/2. Functionally, catalyzes the transfer of a ribosyl phosphate group from 5-phosphoribose 1-diphosphate to orotate, leading to the formation of orotidine monophosphate (OMP). In Helicobacter pylori (strain ATCC 700392 / 26695) (Campylobacter pylori), this protein is Orotate phosphoribosyltransferase.